The chain runs to 400 residues: Tyrosine-specific transport system 1 (400 aa).

The next 12 helical transmembrane spans lie at 5–25, 34–54, 80–100, 117–137, 143–163, 176–196, 211–231, 250–270, 273–293, 313–333, 335–355, and 370–390; these read VGST…AMPL, FTLV…LLFV, IIAT…YISG, VSVL…THSV, VLFF…LPEI, ALII…GSIP, FSIL…QLST, LNGL…ASAV, FSTL…LECI, LTFI…ILAL, YAGQ…VWKA, and NLTL…PFAI.

It belongs to the amino acid/polyamine transporter 2 family. Mtr/TnaB/TyrP permease subfamily.

The protein localises to the cell inner membrane. The catalysed reaction is L-tyrosine(in) + H(+)(in) = L-tyrosine(out) + H(+)(out). Its function is as follows. Transports tyrosine across the cytoplasmic membrane. The transport system is energized by the proton motive force. This chain is Tyrosine-specific transport system 1 (tyrP-A), found in Haemophilus influenzae (strain ATCC 51907 / DSM 11121 / KW20 / Rd).